The chain runs to 266 residues: Metallo-beta-lactamase domain-containing protein 1 (266 aa).

The interval 48–71 is disordered; that stretch reads LPQTRGPASSHRESPRGSGGAEAA. Residues histidine 114, histidine 116, aspartate 118, histidine 119, histidine 169, aspartate 192, and histidine 231 each contribute to the Zn(2+) site. Residues 229–266 are disordered; the sequence is PGHGPPFRVLREASQPETEGGGNSQQEPVVGDEEPALH.

The protein belongs to the metallo-beta-lactamase superfamily. Glyoxalase II family. Homodimer. Zn(2+) serves as cofactor.

It localises to the cytoplasm. It is found in the cytosol. The protein resides in the nucleus. The enzyme catalyses a ribonucleotidyl-ribonucleotide-RNA + H2O = a 3'-end ribonucleotide-RNA + a 5'-end 5'-phospho-ribonucleoside-RNA + H(+). Functionally, endoribonuclease that catalyzes the hydrolysis of histone-coding pre-mRNA 3'-end. Involved in histone pre-mRNA processing during the S-phase of the cell cycle, which is required for entering/progressing through S-phase. Cleaves histone pre-mRNA at a major and a minor cleavage site after the 5'-ACCCA-3' and the 5'-ACCCACA-3' sequence, respectively, and located downstream of the stem-loop. May require the presence of the HDE element located at the histone pre-RNA 3'-end to avoid non-specific cleavage. The polypeptide is Metallo-beta-lactamase domain-containing protein 1 (Homo sapiens (Human)).